We begin with the raw amino-acid sequence, 597 residues long: Probable potassium transport system protein Kup 1 (597 aa).

The next 10 helical transmembrane spans lie at 23–43 (GAWL…DSVL), 72–92 (LTMM…SRGT), 98–118 (VFGS…VVAI), 143–163 (ATGL…EALY), 174–194 (IYFT…GQGA), 226–246 (AVVL…TGAF), 273–293 (LYIP…LLLF), 303–323 (YGLA…IYLW), 329–349 (FGAV…FAAS), and 353–373 (FLHG…IMYT).

This sequence belongs to the HAK/KUP transporter (TC 2.A.72) family.

The protein localises to the cell membrane. It carries out the reaction K(+)(in) + H(+)(in) = K(+)(out) + H(+)(out). In terms of biological role, transport of potassium into the cell. Likely operates as a K(+):H(+) symporter. The polypeptide is Probable potassium transport system protein Kup 1 (kup1) (Bifidobacterium longum (strain NCC 2705)).